The chain runs to 478 residues: Aspartyl/glutamyl-tRNA(Asn/Gln) amidotransferase subunit B (478 aa).

This sequence belongs to the GatB/GatE family. GatB subfamily. As to quaternary structure, heterotrimer of A, B and C subunits.

It carries out the reaction L-glutamyl-tRNA(Gln) + L-glutamine + ATP + H2O = L-glutaminyl-tRNA(Gln) + L-glutamate + ADP + phosphate + H(+). It catalyses the reaction L-aspartyl-tRNA(Asn) + L-glutamine + ATP + H2O = L-asparaginyl-tRNA(Asn) + L-glutamate + ADP + phosphate + 2 H(+). Allows the formation of correctly charged Asn-tRNA(Asn) or Gln-tRNA(Gln) through the transamidation of misacylated Asp-tRNA(Asn) or Glu-tRNA(Gln) in organisms which lack either or both of asparaginyl-tRNA or glutaminyl-tRNA synthetases. The reaction takes place in the presence of glutamine and ATP through an activated phospho-Asp-tRNA(Asn) or phospho-Glu-tRNA(Gln). The protein is Aspartyl/glutamyl-tRNA(Asn/Gln) amidotransferase subunit B of Syntrophotalea carbinolica (strain DSM 2380 / NBRC 103641 / GraBd1) (Pelobacter carbinolicus).